The sequence spans 369 residues: Endo-1,4-beta-xylanase A (369 aa).

Positions 1 to 20 (MRKLTQFCLGLMLLPIAAVA) are cleaved as a signal peptide. Residues 21-367 (QNQPTMKDVL…KPVVKEIIKL (347 aa)) enclose the GH10 domain. The active-site Proton donor is the E156. Catalysis depends on E261, which acts as the Nucleophile.

It belongs to the glycosyl hydrolase 10 (cellulase F) family.

The catalysed reaction is Endohydrolysis of (1-&gt;4)-beta-D-xylosidic linkages in xylans.. It participates in glycan degradation; xylan degradation. This chain is Endo-1,4-beta-xylanase A (xynA), found in Xylanibacter ruminicola (Prevotella ruminicola).